A 444-amino-acid chain; its full sequence is Homocysteine/cysteine synthase (444 aa).

N6-(pyridoxal phosphate)lysine is present on Lys208.

It belongs to the trans-sulfuration enzymes family. As to quaternary structure, homotetramer. Requires pyridoxal 5'-phosphate as cofactor.

It is found in the cytoplasm. The enzyme catalyses O-acetyl-L-homoserine + methanethiol = L-methionine + acetate + H(+). It carries out the reaction O-acetyl-L-homoserine + hydrogen sulfide = L-homocysteine + acetate. It catalyses the reaction O-acetyl-L-serine + hydrogen sulfide = L-cysteine + acetate. Its pathway is amino-acid biosynthesis; L-methionine biosynthesis via de novo pathway; L-homocysteine from O-acetyl-L-homoserine. It functions in the pathway amino-acid biosynthesis; L-cysteine biosynthesis; L-cysteine from L-serine: step 2/2. Functionally, catalyzes the conversion of O-acetyl-L-homoserine (OAH) into homocysteine in the methionine biosynthesis pathway. Also catalyzes the conversion of O-acetylserine (OAS) into cysteine, the last step in the cysteine biosynthesis pathway. The chain is Homocysteine/cysteine synthase (MET17) from Kluyveromyces lactis (strain ATCC 8585 / CBS 2359 / DSM 70799 / NBRC 1267 / NRRL Y-1140 / WM37) (Yeast).